The primary structure comprises 620 residues: Glutathione-regulated potassium-efflux system protein KefC (620 aa).

Transmembrane regions (helical) follow at residues 4–24 (HTLIQALIYLGSAALIVPIAV), 26–46 (LGLGSVLGYLIAGCIIGPWGL), 54–74 (SILHFAEIGVVLMLFIIGLEL), 90–110 (GALQMVICGGLLGLFCMLLGL), 114–134 (VAELIGMTLALSSTAIAMQAM), 149–169 (FAVLLFQDIAAIPLVAMIPLL), 178–198 (MGAFALSALKVAGALVLVVLL), 218–238 (VFSAVALFLVFGFGLLLEEVG), 270–290 (GLLLGLFFIGVGMSIDFGTLL), 294–314 (LRIVILLLGFLIIKIAMLWLI), 327–347 (WFAVLLGQGSEFAFVVFGAAQ), and 359–379 (SLTLAVALSMAATPILLVILN). Positions 399-518 (QPRVIIAGFG…AGVEKPERET (120 aa)) constitute an RCK N-terminal domain. Residues 597–620 (GWQGTEEGKHTGNMADEPETKPSS) form a disordered region.

It belongs to the monovalent cation:proton antiporter 2 (CPA2) transporter (TC 2.A.37) family. KefC subfamily. In terms of assembly, homodimer. Interacts with the regulatory subunit KefF.

Its subcellular location is the cell inner membrane. Its function is as follows. Pore-forming subunit of a potassium efflux system that confers protection against electrophiles. Catalyzes K(+)/H(+) antiport. The sequence is that of Glutathione-regulated potassium-efflux system protein KefC from Escherichia coli (strain K12 / MC4100 / BW2952).